Consider the following 482-residue polypeptide: ATP synthase subunit beta, chloroplastic (482 aa).

ATP is bound at residue 168 to 175; it reads GGAGVGKT.

This sequence belongs to the ATPase alpha/beta chains family. As to quaternary structure, F-type ATPases have 2 components, CF(1) - the catalytic core - and CF(0) - the membrane proton channel. CF(1) has five subunits: alpha(3), beta(3), gamma(1), delta(1), epsilon(1). CF(0) has four main subunits: a(1), b(1), b'(1) and c(9-12).

The protein localises to the plastid. The protein resides in the chloroplast thylakoid membrane. The enzyme catalyses ATP + H2O + 4 H(+)(in) = ADP + phosphate + 5 H(+)(out). In terms of biological role, produces ATP from ADP in the presence of a proton gradient across the membrane. The catalytic sites are hosted primarily by the beta subunits. The protein is ATP synthase subunit beta, chloroplastic of Gnetum parvifolium (Small-leaved jointfir).